Consider the following 151-residue polypeptide: uncharacterized protein (151 aa).

Transmembrane regions (helical) follow at residues 22–42 (IVSITFIAAIALAVIFGGFFF), 62–82 (ALFILACFAVGLIIDPLTKII), 97–117 (LFAFILYFISNLITICFADYF), and 121–141 (IYIPDVLLVVISAFMAIIELA).

It is found in the cell membrane. This is an uncharacterized protein from Bacillus subtilis (strain 168).